The primary structure comprises 304 residues: Proteasome subunit beta (304 aa).

A propeptide spans 1–65 (removed in mature form; by autocatalysis); that stretch reads MTWPHFEQLA…LTPTDAVPHG (65 aa). T66 serves as the catalytic Nucleophile.

Belongs to the peptidase T1B family. As to quaternary structure, the 20S proteasome core is composed of 14 alpha and 14 beta subunits that assemble into four stacked heptameric rings, resulting in a barrel-shaped structure. The two inner rings, each composed of seven catalytic beta subunits, are sandwiched by two outer rings, each composed of seven alpha subunits. The catalytic chamber with the active sites is on the inside of the barrel. Has a gated structure, the ends of the cylinder being occluded by the N-termini of the alpha-subunits. Is capped by the proteasome-associated ATPase, ARC.

The protein localises to the cytoplasm. The catalysed reaction is Cleavage of peptide bonds with very broad specificity.. It functions in the pathway protein degradation; proteasomal Pup-dependent pathway. With respect to regulation, the formation of the proteasomal ATPase ARC-20S proteasome complex, likely via the docking of the C-termini of ARC into the intersubunit pockets in the alpha-rings, may trigger opening of the gate for substrate entry. Interconversion between the open-gate and close-gate conformations leads to a dynamic regulation of the 20S proteasome proteolysis activity. Its function is as follows. Component of the proteasome core, a large protease complex with broad specificity involved in protein degradation. The protein is Proteasome subunit beta of Mycobacterium sp. (strain JLS).